The chain runs to 505 residues: Protein amnionless (505 aa).

The signal sequence occupies residues 1 to 20 (MGLHWQWLIWALVGLHVALA). The Extracellular portion of the chain corresponds to 21–344 (TKWYGGGMDF…RPYNPNVSFS (324 aa)). The chain crosses the membrane as a helical span at residues 345 to 365 (SIVLILFCMALVGLVSVVILA). The Cytoplasmic segment spans residues 366 to 505 (HFMPENPYLN…CEADTDEETI (140 aa)). The segment at 451–482 (GALEEAAKESQEQDEILSVPKMETGDLDARSV) is disordered. Residues 473 to 482 (ETGDLDARSV) show a composition bias toward basic and acidic residues.

In terms of tissue distribution, specifically expressed in nephrocytes.

The protein resides in the cell membrane. Functionally, required in the nephrocyte for normal uptake of proteins and elimination of toxins, and for maintenance of endocytic trafficking structures. May function together with Cubn. This Drosophila melanogaster (Fruit fly) protein is Protein amnionless.